We begin with the raw amino-acid sequence, 138 residues long: Small ribosomal subunit protein uS12 (138 aa).

The residue at position 89 (Asp-89) is a 3-methylthioaspartic acid. The disordered stretch occupies residues 101–138 (ALDTAGTQNRNQGRSKYGTKRPKKGAATAAKGPVKGKK). The segment covering 105-114 (AGTQNRNQGR) has biased composition (polar residues). A compositionally biased stretch (low complexity) spans 125-138 (GAATAAKGPVKGKK).

The protein belongs to the universal ribosomal protein uS12 family. Part of the 30S ribosomal subunit. Contacts proteins S8 and S17. May interact with IF1 in the 30S initiation complex.

Functionally, with S4 and S5 plays an important role in translational accuracy. Interacts with and stabilizes bases of the 16S rRNA that are involved in tRNA selection in the A site and with the mRNA backbone. Located at the interface of the 30S and 50S subunits, it traverses the body of the 30S subunit contacting proteins on the other side and probably holding the rRNA structure together. The combined cluster of proteins S8, S12 and S17 appears to hold together the shoulder and platform of the 30S subunit. This Heliobacterium modesticaldum (strain ATCC 51547 / Ice1) protein is Small ribosomal subunit protein uS12.